A 254-amino-acid chain; its full sequence is MNFVQENNHVLYIWNGAISGEIEQEVNRLKAIPNVQVNVENADRVLLAGYTPSQFDVVLANVPSGNSEMASSLLKLVKPKGKVVFKDDSANAEATRSNLLLSGFINITSLDGNVFVGEKPNYEIGSAAKLSLGGNKAKVAAVWKLDVDDDDDERIDEDELLDEEDKVKPTAESLRVCGTTGKRKACKDCSCGLAEELEAETKGSAVANSEPKSSCGSCYLGDAFRCATCPYLGMPAFKPGEKIQLTDTQMRADI.

Residues 4-132 (VQENNHVLYI…EIGSAAKLSL (129 aa)) are N-terminal SAM-like domain. Residues 132 to 167 (LGGNKAKVAAVWKLDVDDDDDERIDEDELLDEEDKV) are linker. Cys177, Cys186, Cys189, and Cys191 together coordinate [2Fe-2S] cluster. A fe-S binding site A region spans residues 177 to 191 (CGTTGKRKACKDCSC). [4Fe-4S] cluster-binding residues include Cys215, Cys218, Cys226, and Cys229. Short sequence motifs (cx2C motif) lie at residues 215–218 (CGSC) and 226–229 (CATC). The tract at residues 215–229 (CGSCYLGDAFRCATC) is fe-S binding site B.

The protein belongs to the anamorsin family. In terms of assembly, monomer. Requires [2Fe-2S] cluster as cofactor. The cofactor is [4Fe-4S] cluster.

It localises to the cytoplasm. The protein localises to the mitochondrion intermembrane space. Component of the cytosolic iron-sulfur (Fe-S) protein assembly (CIA) machinery. Required for the maturation of extramitochondrial Fe-S proteins. Part of an electron transfer chain functioning in an early step of cytosolic Fe-S biogenesis, facilitating the de novo assembly of a [4Fe-4S] cluster on the cytosolic Fe-S scaffold complex. Electrons are transferred from NADPH via a FAD- and FMN-containing diflavin oxidoreductase. Together with the diflavin oxidoreductase, also required for the assembly of the diferric tyrosyl radical cofactor of ribonucleotide reductase (RNR), probably by providing electrons for reduction during radical cofactor maturation in the catalytic small subunit. The protein is Anamorsin homolog of Aedes aegypti (Yellowfever mosquito).